The chain runs to 487 residues: Phenylalanine--tRNA ligase alpha subunit (487 aa).

L-phenylalanine contacts are provided by residues Thr-319, 361 to 363 (QVE), and Tyr-401. A Mg(2+)-binding site is contributed by Glu-403. Phe-427 lines the L-phenylalanine pocket.

This sequence belongs to the class-II aminoacyl-tRNA synthetase family. Phe-tRNA synthetase alpha subunit type 2 subfamily. In terms of assembly, tetramer of two alpha and two beta subunits. It depends on Mg(2+) as a cofactor.

Its subcellular location is the cytoplasm. The enzyme catalyses tRNA(Phe) + L-phenylalanine + ATP = L-phenylalanyl-tRNA(Phe) + AMP + diphosphate + H(+). The sequence is that of Phenylalanine--tRNA ligase alpha subunit (phesA) from Dictyostelium discoideum (Social amoeba).